The sequence spans 128 residues: Probable heavy metal-dependent transcriptional regulator HI_0293 (128 aa).

The region spanning 1 to 69 is the HTH merR-type domain; sequence MNISEAAKLV…LHQIAQLLAL (69 aa). A DNA-binding region (H-T-H motif) is located at residues 4 to 23; sequence SEAAKLVGLSTKQIRDYEKM.

Its subcellular location is the cytoplasm. Could be a copper-dependent transcriptional activator of the ATPase HI_0290. This chain is Probable heavy metal-dependent transcriptional regulator HI_0293, found in Haemophilus influenzae (strain ATCC 51907 / DSM 11121 / KW20 / Rd).